Here is a 173-residue protein sequence, read N- to C-terminus: ATP synthase subunit b (173 aa).

The helical transmembrane segment at L12–V32 threads the bilayer.

Belongs to the ATPase B chain family. F-type ATPases have 2 components, F(1) - the catalytic core - and F(0) - the membrane proton channel. F(1) has five subunits: alpha(3), beta(3), gamma(1), delta(1), epsilon(1). F(0) has three main subunits: a(1), b(2) and c(10-14). The alpha and beta chains form an alternating ring which encloses part of the gamma chain. F(1) is attached to F(0) by a central stalk formed by the gamma and epsilon chains, while a peripheral stalk is formed by the delta and b chains.

It localises to the cell inner membrane. F(1)F(0) ATP synthase produces ATP from ADP in the presence of a proton or sodium gradient. F-type ATPases consist of two structural domains, F(1) containing the extramembraneous catalytic core and F(0) containing the membrane proton channel, linked together by a central stalk and a peripheral stalk. During catalysis, ATP synthesis in the catalytic domain of F(1) is coupled via a rotary mechanism of the central stalk subunits to proton translocation. In terms of biological role, component of the F(0) channel, it forms part of the peripheral stalk, linking F(1) to F(0). This is ATP synthase subunit b from Leptospira borgpetersenii serovar Hardjo-bovis (strain JB197).